We begin with the raw amino-acid sequence, 359 residues long: Histidinol-phosphate aminotransferase (359 aa).

Residue Lys217 is modified to N6-(pyridoxal phosphate)lysine.

It belongs to the class-II pyridoxal-phosphate-dependent aminotransferase family. Histidinol-phosphate aminotransferase subfamily. In terms of assembly, homodimer. Pyridoxal 5'-phosphate is required as a cofactor.

The catalysed reaction is L-histidinol phosphate + 2-oxoglutarate = 3-(imidazol-4-yl)-2-oxopropyl phosphate + L-glutamate. The protein operates within amino-acid biosynthesis; L-histidine biosynthesis; L-histidine from 5-phospho-alpha-D-ribose 1-diphosphate: step 7/9. The polypeptide is Histidinol-phosphate aminotransferase (Salmonella choleraesuis (strain SC-B67)).